We begin with the raw amino-acid sequence, 325 residues long: Olfactory receptor 5H6 (325 aa).

At 1-41 (MFLYLCFIFQRTCSEEMEEENATLLTEFVLTGFLHQPDCKI) the chain is on the extracellular side. Asn-21 carries N-linked (GlcNAc...) asparagine glycosylation. A helical membrane pass occupies residues 42–62 (PLFLAFLVIYLITIMGNLGLI). Residues 63 to 70 (VLIWKDPH) are Cytoplasmic-facing. A helical membrane pass occupies residues 71-91 (LHIPMYLFLGSLAFVDASLSS). At 92–115 (TVTPKMLINFLAKSKMISLSECMV) the chain is on the extracellular side. A disulfide bridge connects residues Cys-113 and Cys-205. Residues 116-136 (QFFSLVTTVTTECFLLATMAY) traverse the membrane as a helical segment. Topologically, residues 137–155 (DRYVAICKALLYPVIMTNE) are cytoplasmic. The helical transmembrane segment at 156–176 (LCIQLLVLSFIGGLLHALIHE) threads the bilayer. At 177–212 (AFSFRLTFCNSNIIQHFYCDIIPLLKISCTDSSINF) the chain is on the extracellular side. Residues 213 to 233 (LMVFIFAGSVQVFTIGTILIS) form a helical membrane-spanning segment. At 234–253 (YTIILFTILEKKSIKGIRKA) the chain is on the cytoplasmic side. A helical membrane pass occupies residues 254-274 (VSTCGAHLLSVSLYYGPLTFK). Residues 275-287 (YLGSASPQADDQD) lie on the Extracellular side of the membrane. The chain crosses the membrane as a helical span at residues 288–308 (MMESLFYTVIVPLLNPMIYSL). At 309 to 325 (RNKQVIASFTKMFKSNV) the chain is on the cytoplasmic side.

Belongs to the G-protein coupled receptor 1 family.

The protein localises to the cell membrane. In terms of biological role, odorant receptor. In Homo sapiens (Human), this protein is Olfactory receptor 5H6 (OR5H6).